The chain runs to 540 residues: Protein PALS2 (540 aa).

2 consecutive L27 domains span residues 1 to 48 (MQQV…EDSK) and 49 to 107 (LEAV…YDSP). Residues 130–209 (ILGIHKRAGE…SVTLKILPSY (80 aa)) form the PDZ domain. Residues 215-284 (PQQVFVKCHF…PSQFLEEKRK (70 aa)) form the SH3 domain. One can recognise a Guanylate kinase-like domain in the interval 338–525 (RKTLVLIGAQ…AFEKLQTAIE (188 aa)). A Phosphotyrosine modification is found at Y500.

This sequence belongs to the MAGUK family. Interacts with CADM1. Interacts with the LIN7 proteins. As to expression, abundant in testis, brain, and kidney with lower levels detectable in other tissues.

The protein localises to the membrane. The polypeptide is Protein PALS2 (Homo sapiens (Human)).